Here is a 310-residue protein sequence, read N- to C-terminus: GMP synthase [glutamine-hydrolyzing] subunit B (310 aa).

The region spanning 2–185 (FKTEPFIEES…LGLPDQIAHR (184 aa)) is the GMPS ATP-PPase domain. 29-35 (SGGVDSS) lines the ATP pocket.

In terms of assembly, heterodimer composed of a glutamine amidotransferase subunit (A) and a GMP-binding subunit (B).

It carries out the reaction XMP + L-glutamine + ATP + H2O = GMP + L-glutamate + AMP + diphosphate + 2 H(+). It participates in purine metabolism; GMP biosynthesis; GMP from XMP (L-Gln route): step 1/1. Catalyzes the synthesis of GMP from XMP. The protein is GMP synthase [glutamine-hydrolyzing] subunit B of Methanococcus maripaludis (strain C7 / ATCC BAA-1331).